Here is a 79-residue protein sequence, read N- to C-terminus: Metallothionein-like protein type 2 (79 aa).

Belongs to the metallothionein superfamily. Type 15 family.

Its function is as follows. Metallothioneins have a high content of cysteine residues that bind various heavy metals. The sequence is that of Metallothionein-like protein type 2 (MT1) from Malus domestica (Apple).